The sequence spans 170 residues: Adenine phosphoribosyltransferase (170 aa).

The protein belongs to the purine/pyrimidine phosphoribosyltransferase family. As to quaternary structure, homodimer.

The protein localises to the cytoplasm. The enzyme catalyses AMP + diphosphate = 5-phospho-alpha-D-ribose 1-diphosphate + adenine. It participates in purine metabolism; AMP biosynthesis via salvage pathway; AMP from adenine: step 1/1. Catalyzes a salvage reaction resulting in the formation of AMP, that is energically less costly than de novo synthesis. The polypeptide is Adenine phosphoribosyltransferase (Geobacillus kaustophilus (strain HTA426)).